The primary structure comprises 130 residues: MSATQNYGTGRRKTATARVFLRPGTGKISINNRSLEQFFGRETARMVVRQPLELTETVEKFDIYVTVIGGGVSGQAGAIRHGITRALIEYDETFRSSLRHAGYVTRDAREVERKKVGLRKARKRPQYSKR.

It belongs to the universal ribosomal protein uS9 family.

In Azotobacter vinelandii (strain DJ / ATCC BAA-1303), this protein is Small ribosomal subunit protein uS9.